The sequence spans 499 residues: T-cell activation inhibitor, mitochondrial (499 aa).

The stretch at 206–233 (LRNSLPLRKELDRLKNELSELLQLSDIR) forms a coiled coil.

Expressed in peripheral blood leukocytes, mainly in T-lymphocytes.

The protein resides in the mitochondrion. May regulate T-cell apoptosis. This Mus musculus (Mouse) protein is T-cell activation inhibitor, mitochondrial (TCAIM).